We begin with the raw amino-acid sequence, 630 residues long: Chaperone protein HtpG (630 aa).

Positions 1–343 are a; substrate-binding; sequence MAKHQFQTEA…SKDLPLNVSR (343 aa). The b stretch occupies residues 344–554; it reads EILQSNAVMA…KEDPAFMMAQ (211 aa). The interval 555–630 is c; it reads IMKQMGQSGD…RLNRVIAKAI (76 aa).

The protein belongs to the heat shock protein 90 family. Homodimer.

It is found in the cytoplasm. Its function is as follows. Molecular chaperone. Has ATPase activity. In Sulfurimonas denitrificans (strain ATCC 33889 / DSM 1251) (Thiomicrospira denitrificans (strain ATCC 33889 / DSM 1251)), this protein is Chaperone protein HtpG.